The primary structure comprises 101 residues: MMFEYALVLSSYLFSMGIYGLITSRNMVRALMCLELILNAVNMNLVTFSDLFDSRQLKGDIFSIFVIAIAAAEAAIGPAIVSSIHRNRKSTRINQSNLLKK.

A run of 3 helical transmembrane segments spans residues 2–22 (MFEY…YGLI), 32–52 (MCLE…SDLF), and 61–81 (IFSI…PAIV).

This sequence belongs to the complex I subunit 4L family. As to quaternary structure, NDH is composed of at least 16 different subunits, 5 of which are encoded in the nucleus.

It localises to the plastid. The protein resides in the chloroplast thylakoid membrane. It carries out the reaction a plastoquinone + NADH + (n+1) H(+)(in) = a plastoquinol + NAD(+) + n H(+)(out). The catalysed reaction is a plastoquinone + NADPH + (n+1) H(+)(in) = a plastoquinol + NADP(+) + n H(+)(out). Functionally, NDH shuttles electrons from NAD(P)H:plastoquinone, via FMN and iron-sulfur (Fe-S) centers, to quinones in the photosynthetic chain and possibly in a chloroplast respiratory chain. The immediate electron acceptor for the enzyme in this species is believed to be plastoquinone. Couples the redox reaction to proton translocation, and thus conserves the redox energy in a proton gradient. In Amborella trichopoda, this protein is NAD(P)H-quinone oxidoreductase subunit 4L, chloroplastic.